Here is a 379-residue protein sequence, read N- to C-terminus: UDP-4-amino-4-deoxy-L-arabinose--oxoglutarate aminotransferase (379 aa).

At Lys182 the chain carries N6-(pyridoxal phosphate)lysine.

This sequence belongs to the DegT/DnrJ/EryC1 family. ArnB subfamily. Homodimer. Pyridoxal 5'-phosphate is required as a cofactor.

It catalyses the reaction UDP-4-amino-4-deoxy-beta-L-arabinose + 2-oxoglutarate = UDP-beta-L-threo-pentopyranos-4-ulose + L-glutamate. Its pathway is nucleotide-sugar biosynthesis; UDP-4-deoxy-4-formamido-beta-L-arabinose biosynthesis; UDP-4-deoxy-4-formamido-beta-L-arabinose from UDP-alpha-D-glucuronate: step 2/3. It functions in the pathway bacterial outer membrane biogenesis; lipopolysaccharide biosynthesis. Functionally, catalyzes the conversion of UDP-4-keto-arabinose (UDP-Ara4O) to UDP-4-amino-4-deoxy-L-arabinose (UDP-L-Ara4N). The modified arabinose is attached to lipid A and is required for resistance to polymyxin and cationic antimicrobial peptides. In Escherichia coli (strain K12 / DH10B), this protein is UDP-4-amino-4-deoxy-L-arabinose--oxoglutarate aminotransferase.